Reading from the N-terminus, the 175-residue chain is Putative transmembrane protein ORF175 (175 aa).

A run of 4 helical transmembrane segments spans residues 14 to 34, 58 to 78, 101 to 121, and 142 to 162; these read LGIV…GSFM, VLSN…AIAF, IVVA…FALF, and ITPF…VLSI.

It is found in the host membrane. The protein is Putative transmembrane protein ORF175 of Acidianus two-tailed virus (ATV).